The sequence spans 305 residues: GMP synthase [glutamine-hydrolyzing] subunit B (305 aa).

One can recognise a GMPS ATP-PPase domain in the interval 2-184 (VNTERFIQQA…LGLPREIQHR (183 aa)). 29 to 35 (SGGVDSS) lines the ATP pocket.

In terms of assembly, heterodimer composed of a glutamine amidotransferase subunit (A) and a GMP-binding subunit (B).

The catalysed reaction is XMP + L-glutamine + ATP + H2O = GMP + L-glutamate + AMP + diphosphate + 2 H(+). Its pathway is purine metabolism; GMP biosynthesis; GMP from XMP (L-Gln route): step 1/1. Functionally, catalyzes the synthesis of GMP from XMP. This Methanosphaerula palustris (strain ATCC BAA-1556 / DSM 19958 / E1-9c) protein is GMP synthase [glutamine-hydrolyzing] subunit B.